The primary structure comprises 533 residues: Glycogen synthase (533 aa).

ADP-alpha-D-glucose is bound at residue Lys12. The disordered stretch occupies residues Ala497–Lys533. Residues Ala512 to Ala525 show a composition bias toward basic and acidic residues.

The protein belongs to the glycosyltransferase 1 family. Bacterial/plant glycogen synthase subfamily.

It carries out the reaction [(1-&gt;4)-alpha-D-glucosyl](n) + ADP-alpha-D-glucose = [(1-&gt;4)-alpha-D-glucosyl](n+1) + ADP + H(+). It participates in glycan biosynthesis; glycogen biosynthesis. In terms of biological role, synthesizes alpha-1,4-glucan chains using ADP-glucose. This chain is Glycogen synthase, found in Burkholderia thailandensis (strain ATCC 700388 / DSM 13276 / CCUG 48851 / CIP 106301 / E264).